The following is a 102-amino-acid chain: Integration host factor subunit alpha (102 aa).

The tract at residues 49 to 70 (FGNFQLRTKPQRPGRNPKTGEE) is disordered.

It belongs to the bacterial histone-like protein family. Heterodimer of an alpha and a beta chain.

Functionally, this protein is one of the two subunits of integration host factor, a specific DNA-binding protein that functions in genetic recombination as well as in transcriptional and translational control. The chain is Integration host factor subunit alpha from Nitrosomonas europaea (strain ATCC 19718 / CIP 103999 / KCTC 2705 / NBRC 14298).